Here is a 467-residue protein sequence, read N- to C-terminus: tRNA-2-methylthio-N(6)-dimethylallyladenosine synthase (467 aa).

Residues 1–20 (MSDDTTQIEPAMAQETSPRA) are disordered. The MTTase N-terminal domain maps to 23–143 (RKVFVKTYGC…LPNALARVRG (121 aa)). Residues cysteine 32, cysteine 68, cysteine 106, cysteine 184, cysteine 188, and cysteine 191 each coordinate [4Fe-4S] cluster. The region spanning 170–402 (RKRGVSAFLT…QALLSAQQYA (233 aa)) is the Radical SAM core domain. The TRAM domain occupies 405 to 467 (DSMIGRKMDV…TNSLIAQKLA (63 aa)).

It belongs to the methylthiotransferase family. MiaB subfamily. As to quaternary structure, monomer. [4Fe-4S] cluster is required as a cofactor.

It localises to the cytoplasm. It catalyses the reaction N(6)-dimethylallyladenosine(37) in tRNA + (sulfur carrier)-SH + AH2 + 2 S-adenosyl-L-methionine = 2-methylsulfanyl-N(6)-dimethylallyladenosine(37) in tRNA + (sulfur carrier)-H + 5'-deoxyadenosine + L-methionine + A + S-adenosyl-L-homocysteine + 2 H(+). Functionally, catalyzes the methylthiolation of N6-(dimethylallyl)adenosine (i(6)A), leading to the formation of 2-methylthio-N6-(dimethylallyl)adenosine (ms(2)i(6)A) at position 37 in tRNAs that read codons beginning with uridine. In Brucella suis (strain ATCC 23445 / NCTC 10510), this protein is tRNA-2-methylthio-N(6)-dimethylallyladenosine synthase.